The primary structure comprises 352 residues: Histidinol-phosphate aminotransferase (352 aa).

Residue lysine 210 is modified to N6-(pyridoxal phosphate)lysine.

The protein belongs to the class-II pyridoxal-phosphate-dependent aminotransferase family. Histidinol-phosphate aminotransferase subfamily. As to quaternary structure, homodimer. The cofactor is pyridoxal 5'-phosphate.

The catalysed reaction is L-histidinol phosphate + 2-oxoglutarate = 3-(imidazol-4-yl)-2-oxopropyl phosphate + L-glutamate. The protein operates within amino-acid biosynthesis; L-histidine biosynthesis; L-histidine from 5-phospho-alpha-D-ribose 1-diphosphate: step 7/9. This chain is Histidinol-phosphate aminotransferase, found in Clostridium acetobutylicum (strain ATCC 824 / DSM 792 / JCM 1419 / IAM 19013 / LMG 5710 / NBRC 13948 / NRRL B-527 / VKM B-1787 / 2291 / W).